The following is a 139-amino-acid chain: Nucleoside diphosphate kinase (139 aa).

ATP contacts are provided by Lys10, Phe58, Arg86, Thr92, Arg103, and Asn113. His116 functions as the Pros-phosphohistidine intermediate in the catalytic mechanism.

It belongs to the NDK family. As to quaternary structure, homotetramer. It depends on Mg(2+) as a cofactor.

Its subcellular location is the cytoplasm. It carries out the reaction a 2'-deoxyribonucleoside 5'-diphosphate + ATP = a 2'-deoxyribonucleoside 5'-triphosphate + ADP. It catalyses the reaction a ribonucleoside 5'-diphosphate + ATP = a ribonucleoside 5'-triphosphate + ADP. In terms of biological role, major role in the synthesis of nucleoside triphosphates other than ATP. The ATP gamma phosphate is transferred to the NDP beta phosphate via a ping-pong mechanism, using a phosphorylated active-site intermediate. The protein is Nucleoside diphosphate kinase of Desulfovibrio desulfuricans (strain ATCC 27774 / DSM 6949 / MB).